Reading from the N-terminus, the 885-residue chain is Probable LRR receptor-like serine/threonine-protein kinase At1g51820 (885 aa).

Positions 1 to 20 (MERHFVFIATYLLIFHLVQA) are cleaved as a signal peptide. At 21 to 509 (QNQTGFISVD…GHKKKSVIVP (489 aa)) the chain is on the extracellular side. N-linked (GlcNAc...) asparagine glycans are attached at residues asparagine 22, asparagine 93, asparagine 135, asparagine 194, asparagine 228, asparagine 250, asparagine 254, asparagine 281, asparagine 287, asparagine 424, asparagine 437, asparagine 456, and asparagine 461. LRR repeat units lie at residues 403 to 424 (IITSLDLSSSGLTGIITQAIKN), 427 to 447 (HLQILDLSDNNLTGEVPEFLA), and 451 to 473 (SLLVINLSGNNLSGSVPPSLLQK). Residues 510–530 (VVASIASIAVLIGALVLFLIL) form a helical membrane-spanning segment. The Cytoplasmic segment spans residues 531 to 885 (RKKRSPKVEG…FGTEVSPNAR (355 aa)). A Protein kinase domain is found at 578 to 851 (NNFQRILGKG…QVVIELNECL (274 aa)). Residues 584-592 (LGKGGFGMV) and lysine 606 each bind ATP. Tyrosine 651 is modified (phosphotyrosine). The Proton acceptor role is filled by aspartate 703. Serine 737 carries the post-translational modification Phosphoserine. Threonine 738 and threonine 743 each carry phosphothreonine. Phosphotyrosine is present on tyrosine 751.

It belongs to the protein kinase superfamily. Ser/Thr protein kinase family.

It localises to the membrane. The enzyme catalyses L-seryl-[protein] + ATP = O-phospho-L-seryl-[protein] + ADP + H(+). It carries out the reaction L-threonyl-[protein] + ATP = O-phospho-L-threonyl-[protein] + ADP + H(+). This is Probable LRR receptor-like serine/threonine-protein kinase At1g51820 from Arabidopsis thaliana (Mouse-ear cress).